A 970-amino-acid chain; its full sequence is Unconventional myosin-XIX (970 aa).

In terms of domain architecture, Myosin motor spans Y35–A758. G132–T139 lines the ATP pocket. Positions L602 to S624 are actin-binding. Position 685 is a phosphoserine (S685). 2 IQ domains span residues R759 to E779 and Q783 to V812. The tract at residues M824 to G970 is myMOMA region.

The protein belongs to the TRAFAC class myosin-kinesin ATPase superfamily. Myosin family. As to quaternary structure, myosin is a hexamer of 2 heavy chains and 4 light chains: interacts with myosin light chains MYL9 and MYL12B. As to expression, widely expressed in multiple tissues and cell lines.

It is found in the mitochondrion outer membrane. Its subcellular location is the cytoplasm. It localises to the cytoskeleton. Actin-based motor molecule with ATPase activity that localizes to the mitochondrion outer membrane. Motor protein that moves towards the plus-end of actin filaments. Required for mitochondrial inheritance during mitosis. May be involved in mitochondrial transport or positioning. The chain is Unconventional myosin-XIX from Homo sapiens (Human).